Reading from the N-terminus, the 569-residue chain is 63 kDa chaperonin, mitochondrial (569 aa).

The N-terminal 29 residues, 1 to 29 (MFKMYRSPHITRNSFKYLKATNINSCRFY), are a transit peptide targeting the mitochondrion.

Belongs to the chaperonin (HSP60) family. Forms a single seven-member ring complex, in tight association with the p60 protein. Testis.

It is found in the mitochondrion. Its function is as follows. Implicated in mitochondrial protein import and macromolecular assembly. May facilitate the correct folding of imported proteins. May also prevent misfolding and promote the refolding and proper assembly of unfolded polypeptides generated under stress conditions in the mitochondrial matrix. In Heliothis virescens (Tobacco budworm moth), this protein is 63 kDa chaperonin, mitochondrial.